The following is a 372-amino-acid chain: Flagellar P-ring protein (372 aa).

The first 26 residues, 1–26 (MNLSSLPFRLLAAAVALCAIAAPASA), serve as a signal peptide directing secretion.

The protein belongs to the FlgI family. As to quaternary structure, the basal body constitutes a major portion of the flagellar organelle and consists of four rings (L,P,S, and M) mounted on a central rod.

It is found in the periplasm. The protein localises to the bacterial flagellum basal body. Its function is as follows. Assembles around the rod to form the L-ring and probably protects the motor/basal body from shearing forces during rotation. This is Flagellar P-ring protein from Xanthomonas campestris pv. campestris (strain B100).